Here is a 123-residue protein sequence, read N- to C-terminus: Large ribosomal subunit protein uL14 (123 aa).

It belongs to the universal ribosomal protein uL14 family. Part of the 50S ribosomal subunit. Forms a cluster with proteins L3 and L19. In the 70S ribosome, L14 and L19 interact and together make contacts with the 16S rRNA in bridges B5 and B8.

Its function is as follows. Binds to 23S rRNA. Forms part of two intersubunit bridges in the 70S ribosome. This is Large ribosomal subunit protein uL14 from Erwinia tasmaniensis (strain DSM 17950 / CFBP 7177 / CIP 109463 / NCPPB 4357 / Et1/99).